We begin with the raw amino-acid sequence, 576 residues long: Rop guanine nucleotide exchange factor 13 (576 aa).

The PRONE domain occupies 119 to 485 (KSCYFAYVTE…QLTQNPELAM (367 aa)). A compositionally biased stretch (polar residues) spans 557–570 (KTTYLESLGTTRSP). The disordered stretch occupies residues 557 to 576 (KTTYLESLGTTRSPTAGRYS).

In terms of assembly, interacts with PRK6. In terms of tissue distribution, specifically expressed in mature flowers.

Guanine-nucleotide exchange factor (GEF) that acts as an activator of Rop (Rho of plants) GTPases by promoting the exchange of GDP for GTP. This is Rop guanine nucleotide exchange factor 13 from Arabidopsis thaliana (Mouse-ear cress).